Here is a 504-residue protein sequence, read N- to C-terminus: Catalase (504 aa).

The segment at 1 to 25 is disordered; the sequence is MSKQDGKLTGLFGAPVSDRENSMTA. Catalysis depends on residues His56 and Asn129. Tyr339 provides a ligand contact to heme.

It belongs to the catalase family. As to quaternary structure, homodimer. Heme serves as cofactor.

It carries out the reaction 2 H2O2 = O2 + 2 H2O. Its function is as follows. Decomposes hydrogen peroxide into water and oxygen; serves to protect cells from the toxic effects of hydrogen peroxide. The protein is Catalase (katA) of Staphylococcus epidermidis (strain ATCC 35984 / DSM 28319 / BCRC 17069 / CCUG 31568 / BM 3577 / RP62A).